The following is a 194-amino-acid chain: Ras-like protein rasS (194 aa).

GTP is bound at residue 10-17 (GPGGVGKS). An Effector region motif is present at residues 32-40 (YDPTLEDSY). GTP-binding positions include 57 to 61 (DTAGQ) and 116 to 119 (NKCD). A disordered region spans residues 168-194 (RQSNQHSNSQEQNTDQPIKKKKSCNLL). Low complexity predominate over residues 169 to 180 (QSNQHSNSQEQN). Cys-191 is subject to Cysteine methyl ester. Residue Cys-191 is the site of S-geranylgeranyl cysteine attachment. A propeptide spans 192–194 (NLL) (removed in mature form).

This sequence belongs to the small GTPase superfamily. Ras family.

The protein localises to the cell membrane. It catalyses the reaction GTP + H2O = GDP + phosphate + H(+). Ras proteins bind GDP/GTP and possess intrinsic GTPase activity. The chain is Ras-like protein rasS (rasS) from Dictyostelium discoideum (Social amoeba).